The sequence spans 243 residues: Amphiregulin (243 aa).

The N-terminal stretch at methionine 1–alanine 24 is a signal peptide. The propeptide occupies alanine 25–glutamine 96. N-linked (GlcNAc...) asparagine glycosylation is present at asparagine 30. Residues serine 55–serine 67 are compositionally biased toward polar residues. 2 disordered regions span residues serine 55–glutamate 75 and isoleucine 98–asparagine 135. A compositionally biased stretch (basic and acidic residues) spans isoleucine 98–lysine 113. Asparagine 103 carries an N-linked (GlcNAc...) asparagine glycan. Basic residues predominate over residues proline 114–asparagine 135. The EGF-like domain occupies lysine 133–glycine 173. Disulfide bonds link cysteine 137-cysteine 150, cysteine 145-cysteine 161, and cysteine 163-cysteine 172. A helical membrane pass occupies residues isoleucine 190 to valine 213. Asparagine 236 is a glycosylation site (N-linked (GlcNAc...) asparagine).

The protein belongs to the amphiregulin family. As to quaternary structure, the immature precursor interacts with CNIH.

It localises to the membrane. Ligand of the EGF receptor/EGFR. Autocrine growth factor as well as a mitogen for a broad range of target cells including astrocytes, Schwann cells and fibroblasts. The chain is Amphiregulin (Areg) from Rattus norvegicus (Rat).